Here is a 485-residue protein sequence, read N- to C-terminus: Probable cobyric acid synthase (485 aa).

Positions 250–435 (EIEVAVIRLP…LHGLFDNRNI (186 aa)) constitute a GATase cobBQ-type domain. The active-site Nucleophile is the Cys328. His427 is a catalytic residue.

Belongs to the CobB/CobQ family. CobQ subfamily.

It participates in cofactor biosynthesis; adenosylcobalamin biosynthesis. Functionally, catalyzes amidations at positions B, D, E, and G on adenosylcobyrinic A,C-diamide. NH(2) groups are provided by glutamine, and one molecule of ATP is hydrogenolyzed for each amidation. The chain is Probable cobyric acid synthase from Methanosarcina mazei (strain ATCC BAA-159 / DSM 3647 / Goe1 / Go1 / JCM 11833 / OCM 88) (Methanosarcina frisia).